We begin with the raw amino-acid sequence, 470 residues long: Sperm-associated antigen 8 (470 aa).

Residues 1-21 are compositionally biased toward polar residues; it reads METTESTEGSLSRSCDVQPSS. 3 disordered regions span residues 1–70, 117–178, and 302–321; these read METT…PPAH, SGTC…GQGP, and LTTQ…DSYQ. Positions 27 to 48 are enriched in low complexity; the sequence is PSEPVPSSSSSPRSTAPAEAPA. Over residues 51–60 the composition is skewed to polar residues; it reads SVLTEPSSDS. 2 stretches are compositionally biased toward low complexity: residues 122–175 and 303–316; these read LGQS…ADPG and TTQP…STTQ. Mn stretches follow at residues 312 to 325 and 364 to 378; these read SSTT…LPRH and ESVT…LVRA.

The protein belongs to the SPAG8 family. In terms of assembly, microtubule inner protein component of sperm flagellar doublet microtubules. Interacts with FHL5 (via second LIM domain). Interacts with RANBP9. In terms of tissue distribution, expressed in testis (at protein level). Not detected in brain, heart, kidney, spleen, liver, lung, thymus and colon (at protein level).

Its subcellular location is the cytoplasm. The protein localises to the nucleus. It localises to the cytoplasmic vesicle. The protein resides in the secretory vesicle. It is found in the acrosome. Its subcellular location is the cytoskeleton. The protein localises to the microtubule organizing center. It localises to the spindle. The protein resides in the cilium axoneme. It is found in the flagellum axoneme. Microtubule inner protein (MIP) part of the dynein-decorated doublet microtubules (DMTs) in cilia axoneme, which is required for motile cilia beating. Plays a role in spermatogenesis by enhancing the binding of CREM isoform tau to its coactivator FHL5 and increasing the FHL5-regulated transcriptional activation of CREM isoform tau. Involved in the acrosome reaction and in binding of sperm to the zona pellucida. Plays a role in regulation of the cell cycle by controlling progression through the G2/M phase, possibly by delaying the activation of CDK1 which is required for entry into mitosis. May play a role in fertility and microtubule formation through interaction with RANBP9. The protein is Sperm-associated antigen 8 of Mus musculus (Mouse).